Consider the following 1222-residue polypeptide: Alpha-mannosidase D (1222 aa).

The signal sequence occupies residues 1–21; sequence MESSKFVKIIWVFGIWILVFT. Residues 22–1170 are Extracellular-facing; the sequence is FLIIYNNYDY…KYNRPNHLAL (1149 aa). Residues histidine 71 and aspartate 73 each contribute to the Zn(2+) site. N-linked (GlcNAc...) asparagine glycosylation is present at asparagine 175. Positions 185 and 453 each coordinate Zn(2+). Aspartate 185 functions as the Nucleophile in the catalytic mechanism. 13 N-linked (GlcNAc...) asparagine glycosylation sites follow: asparagine 492, asparagine 496, asparagine 547, asparagine 551, asparagine 566, asparagine 613, asparagine 665, asparagine 768, asparagine 785, asparagine 952, asparagine 981, asparagine 1069, and asparagine 1084. Residues 493 to 549 are compositionally biased toward low complexity; the sequence is KSNNKTNNNNNNNNKNNNNNNNNNNNNNNNLKNTNSISTTGSSSSSGSGSSNNNNNT. The tract at residues 493-554 is disordered; it reads KSNNKTNNNN…NNNNTVNKSE (62 aa). Residues 1171 to 1191 form a helical membrane-spanning segment; that stretch reads ILSLSIGIPAGILIIVIALVV. The Cytoplasmic segment spans residues 1192 to 1222; sequence TYKKRKNRKTLTSSNSSSNLIQQEDQTDYSP. The span at 1202–1211 shows a compositional bias: low complexity; that stretch reads LTSSNSSSNL. The interval 1202–1222 is disordered; sequence LTSSNSSSNLIQQEDQTDYSP. A compositionally biased stretch (polar residues) spans 1212 to 1222; that stretch reads IQQEDQTDYSP.

The protein belongs to the glycosyl hydrolase 38 family. The cofactor is Zn(2+).

The protein resides in the membrane. It carries out the reaction Hydrolysis of terminal, non-reducing alpha-D-mannose residues in alpha-D-mannosides.. The polypeptide is Alpha-mannosidase D (manD) (Dictyostelium discoideum (Social amoeba)).